We begin with the raw amino-acid sequence, 201 residues long: Holliday junction branch migration complex subunit RuvA (201 aa).

The interval 1-63 is domain I; sequence MIAYIKGTLN…EDAQILFGFQ (63 aa). The interval 64-142 is domain II; it reads NRDEKYLFTK…SVFSITDEQQ (79 aa). Positions 143–149 are flexible linker; that stretch reads KSSVSNV. A domain III region spans residues 150 to 201; the sequence is NNNEVYSEAMEALKALGYTDKEVKQVLPHLKKDNDALSVDEAIRKALALLAK.

This sequence belongs to the RuvA family. As to quaternary structure, homotetramer. Forms an RuvA(8)-RuvB(12)-Holliday junction (HJ) complex. HJ DNA is sandwiched between 2 RuvA tetramers; dsDNA enters through RuvA and exits via RuvB. An RuvB hexamer assembles on each DNA strand where it exits the tetramer. Each RuvB hexamer is contacted by two RuvA subunits (via domain III) on 2 adjacent RuvB subunits; this complex drives branch migration. In the full resolvosome a probable DNA-RuvA(4)-RuvB(12)-RuvC(2) complex forms which resolves the HJ.

It localises to the cytoplasm. The RuvA-RuvB-RuvC complex processes Holliday junction (HJ) DNA during genetic recombination and DNA repair, while the RuvA-RuvB complex plays an important role in the rescue of blocked DNA replication forks via replication fork reversal (RFR). RuvA specifically binds to HJ cruciform DNA, conferring on it an open structure. The RuvB hexamer acts as an ATP-dependent pump, pulling dsDNA into and through the RuvAB complex. HJ branch migration allows RuvC to scan DNA until it finds its consensus sequence, where it cleaves and resolves the cruciform DNA. The polypeptide is Holliday junction branch migration complex subunit RuvA (Oceanobacillus iheyensis (strain DSM 14371 / CIP 107618 / JCM 11309 / KCTC 3954 / HTE831)).